We begin with the raw amino-acid sequence, 22 residues long: Peptide PGLa-BM3 (22 aa).

L22 carries the leucine amide modification.

Expressed by the skin glands.

It localises to the secreted. Its function is as follows. Antimicrobial peptide. This chain is Peptide PGLa-BM3, found in Xenopus boumbaensis (Mawa clawed frog).